We begin with the raw amino-acid sequence, 476 residues long: Replication factor C large subunit (476 aa).

Residue 43-50 (GKPGIGKT) coordinates ATP. A disordered region spans residues 435–476 (LEALRMQEPPVPETPPAAEEQPLEEPQEEKKLAPKQATLDFF).

The protein belongs to the activator 1 small subunits family. RfcL subfamily. In terms of assembly, heteromultimer composed of small subunits (RfcS) and large subunits (RfcL).

Functionally, part of the RFC clamp loader complex which loads the PCNA sliding clamp onto DNA. This Methanocorpusculum labreanum (strain ATCC 43576 / DSM 4855 / Z) protein is Replication factor C large subunit.